A 532-amino-acid polypeptide reads, in one-letter code: Hepatocyte nuclear factor 1-beta-B (532 aa).

The tract at residues 1–35 (MFTDMVSKLTSLQQELLSALLDSGVTKDVLVQALE) is dimerization. Residues 5–36 (MVSKLTSLQQELLSALLDSGVTKDVLVQALED) enclose the HNF-p1 domain. The interval 74–95 (TGAQGKGGKLSGDEGSEDGDDF) is disordered. One can recognise a POU-specific atypical domain in the interval 102 to 197 (RELQSLNTEE…IDRQFDRVQG (96 aa)). Over residues 222 to 231 (SSGAAGGSGA) the composition is skewed to gly residues. 2 disordered regions span residues 222–245 (SSGA…KRMR) and 500–532 (EAGQ…LQAW). The homeobox; HNF1-type DNA-binding region spans 244 to 324 (MRRNRFKWGP…NRRKEEAFRQ (81 aa)). Residues 505–532 (SHPSRYSTMDSSTITHLGSSKQCPLQAW) show a composition bias toward polar residues.

Belongs to the HNF1 homeobox family. Binds DNA as a dimer. Can form homodimer or heterodimer with HNF1-alpha. In terms of tissue distribution, first expressed at stage 10 in the intermediate mesoderm. Expressed in rhombomere r5 by 14 hpf with expression diminishing by 18 hpf.

It is found in the nucleus. Its function is as follows. Transcription factor that binds to the inverted palindrome 5'-GTTAATNATTAAC-3'. Acts downstream of hnf1ba but is not required for induction of rhombomere r5/r6 gene expression in the hindbrain. This is Hepatocyte nuclear factor 1-beta-B from Danio rerio (Zebrafish).